Here is a 297-residue protein sequence, read N- to C-terminus: Craniofacial development protein 1 (297 aa).

Acidic residues-rich tracts occupy residues 1-18, 25-43, and 70-79; these read MEEF…DEDY, YSED…DGEE, and LEEDEEDANE. Disordered regions lie at residues 1-157 and 190-222; these read MEEF…KPKE and FFKQ…SSGM. Residues serine 81, serine 84, and serine 85 each carry the phosphoserine modification. A compositionally biased stretch (basic and acidic residues) spans 97–111; that stretch reads KGVESEDARKKKEDE. Residue serine 115 is modified to Phosphoserine. 2 stretches are compositionally biased toward basic and acidic residues: residues 147-157 and 190-199; these read VKAERLEKPKE and FFKQNEKEKP. Residue lysine 148 forms a Glycyl lysine isopeptide (Lys-Gly) (interchain with G-Cter in SUMO2) linkage. The hydrophilic stretch occupies residues 176 to 215; that stretch reads VIKEVDATSKEAKSFFKQNEKEKPQSNVPPAVPSLPAGSG. Serine 214 carries the post-translational modification Phosphoserine. One can recognise a BCNT-C domain in the interval 216-297; the sequence is LKRSSGMSSL…RDLRLSKMKP (82 aa). Lysine 217 carries the N6-methyllysine modification. Serine 248 is subject to Phosphoserine.

In terms of tissue distribution, brain.

Its function is as follows. May play a role during embryogenesis. The polypeptide is Craniofacial development protein 1 (CFDP1) (Bos taurus (Bovine)).